The chain runs to 894 residues: Leucine--tRNA ligase, mitochondrial (894 aa).

The N-terminal 9 residues, Met1–Phe9, are a transit peptide targeting the mitochondrion. A 'HIGH' region motif is present at residues Pro56 to His66. The 'KMSKS' region signature appears at Lys646–Ser650. An ATP-binding site is contributed by Lys649.

Belongs to the class-I aminoacyl-tRNA synthetase family.

The protein resides in the mitochondrion matrix. It carries out the reaction tRNA(Leu) + L-leucine + ATP = L-leucyl-tRNA(Leu) + AMP + diphosphate. In terms of biological role, catalyzes the attachment of leucine to tRNA(Leu) in the mitochondrion. The protein is Leucine--tRNA ligase, mitochondrial (NAM2) of Saccharomyces cerevisiae (strain ATCC 204508 / S288c) (Baker's yeast).